We begin with the raw amino-acid sequence, 239 residues long: tRNA (guanine-N(1)-)-methyltransferase (239 aa).

Residues Gly108 and 127 to 132 (LGDYVL) each bind S-adenosyl-L-methionine.

It belongs to the RNA methyltransferase TrmD family. As to quaternary structure, homodimer.

Its subcellular location is the cytoplasm. It carries out the reaction guanosine(37) in tRNA + S-adenosyl-L-methionine = N(1)-methylguanosine(37) in tRNA + S-adenosyl-L-homocysteine + H(+). Specifically methylates guanosine-37 in various tRNAs. This chain is tRNA (guanine-N(1)-)-methyltransferase, found in Streptococcus pneumoniae serotype 19F (strain G54).